The chain runs to 687 residues: Translation initiation factor IF-2 (687 aa).

Positions 186–355 constitute a tr-type G domain; it reads KRPPIVTVMG…LLTAEMLELK (170 aa). Residues 195-202 are G1; that stretch reads GHVDHGKT. A GTP-binding site is contributed by 195-202; it reads GHVDHGKT. Positions 220–224 are G2; that stretch reads GITQH. Positions 241-244 are G3; sequence DTPG. Residues 241-245 and 295-298 each bind GTP; these read DTPGH and NKID. A G4 region spans residues 295–298; sequence NKID. Residues 331–333 form a G5 region; sequence SAK.

It belongs to the TRAFAC class translation factor GTPase superfamily. Classic translation factor GTPase family. IF-2 subfamily.

Its subcellular location is the cytoplasm. Its function is as follows. One of the essential components for the initiation of protein synthesis. Protects formylmethionyl-tRNA from spontaneous hydrolysis and promotes its binding to the 30S ribosomal subunits. Also involved in the hydrolysis of GTP during the formation of the 70S ribosomal complex. In Clostridium botulinum (strain Eklund 17B / Type B), this protein is Translation initiation factor IF-2.